Here is a 220-residue protein sequence, read N- to C-terminus: Phosphatidylinositol phosphate synthase (220 aa).

2 helical membrane-spanning segments follow: residues 21–46 and 52–72; these read LLRAGFTPDTVTIFGTAASVVAALTL and LFWGGMAVWLFAMFDMLDGAM. 29-32 is an a CDP-1,2-diacyl-sn-glycerol binding site; it reads DTVT. 2 residues coordinate Mg(2+): D66 and D69. Positions 70, 74, and 80 each coordinate a CDP-1,2-diacyl-sn-glycerol. Mg(2+) contacts are provided by D87 and D91. D91 serves as the catalytic Proton acceptor. 4 consecutive transmembrane segments (helical) span residues 93 to 110, 116 to 134, 154 to 171, and 177 to 194; these read VADGAVFAGLVWWAAFGW, VVATLICMITSQVISYVKA, LIIVLAGAIFSGGFGVQW, and MWVLAVASLVTVAQRMHA.

The protein belongs to the CDP-alcohol phosphatidyltransferase class-I family. As to quaternary structure, homodimer. Mg(2+) is required as a cofactor.

The protein resides in the cell membrane. It catalyses the reaction a CDP-1,2-diacyl-sn-glycerol + 1D-myo-inositol 3-phosphate = a 1,2-diacyl-sn-glycero-3-phospho-(1D-myo-inositol-3-phosphate) + CMP + H(+). The catalysed reaction is 1,2-di-(9Z-octadecenoyl)-sn-glycero-3-cytidine-5'-diphosphate + 1D-myo-inositol 3-phosphate = 1,2-di-(9Z-octadecenoyl)-sn-glycero-3-phospho-(1D-myo-inositol-3-phosphate) + CMP + H(+). Its pathway is phospholipid metabolism; phosphatidylinositol phosphate biosynthesis. Its function is as follows. Catalyzes the conjugation of the 1'-hydroxyl group of D-myo-inositol-3-phosphate (also named L-myo-inositol-1-phosphate) with a lipid tail of cytidine diphosphate diacylglycerol (CDP-DAG), forming phosphatidylinositol phosphate (PIP) and CMP. PIP is a precursor of phosphatidylinositol (PI) which is an essential lipid for mycobacteria required for formation of their cell wall. The sequence is that of Phosphatidylinositol phosphate synthase from Mycobacteroides abscessus (strain ATCC 19977 / DSM 44196 / CCUG 20993 / CIP 104536 / JCM 13569 / NCTC 13031 / TMC 1543 / L948) (Mycobacterium abscessus).